The following is a 660-amino-acid chain: Macrolide export ATP-binding/permease protein MacB (660 aa).

One can recognise an ABC transporter domain in the interval 10–248 (LVLENIVRKF…TDSQALYGKQ (239 aa)). Residue 46 to 53 (GASGSGKS) participates in ATP binding. A run of 4 helical transmembrane segments spans residues 285 to 305 (FLTM…VALG), 532 to 552 (ILTL…GIGV), 593 to 613 (VIGG…FLLF), and 625 to 645 (SIIL…FSPA).

It belongs to the ABC transporter superfamily. Macrolide exporter (TC 3.A.1.122) family. In terms of assembly, homodimer.

It localises to the cell inner membrane. Non-canonical ABC transporter that contains transmembrane domains (TMD), which form a pore in the inner membrane, and an ATP-binding domain (NBD), which is responsible for energy generation. Confers resistance against macrolides. In Bartonella henselae (strain ATCC 49882 / DSM 28221 / CCUG 30454 / Houston 1) (Rochalimaea henselae), this protein is Macrolide export ATP-binding/permease protein MacB.